Consider the following 807-residue polypeptide: cAMP-regulated phosphoprotein 21 (807 aa).

The tract at residues 1–127 (MSEQGGLTPT…KNREKLSERP (127 aa)) is disordered. Position 2 is an N-acetylserine (Ser-2). Ser-32 bears the Phosphoserine mark. Positions 32–57 (SLDEEEKLELQRRLAAQNQERRKSKS) form a coiled coil. The residue at position 55 (Ser-55) is a Phosphoserine; by PKA. The segment covering 89–98 (IHLQLSSFPS) has biased composition (polar residues). Residues 101–127 (EEDKSRKDDSEREKEKDKNREKLSERP) are compositionally biased toward basic and acidic residues. The residue at position 133 (Ser-133) is a Phosphoserine. Positions 163-226 (RMILLKMEQE…SVIINKTSST (64 aa)) constitute an R3H domain. The region spanning 227–298 (RIPEQRFCEH…VRERIFAHDS (72 aa)) is the SUZ domain. A disordered region spans residues 245–282 (SQKRFILKRDNSSIDKEDNQNRMHPFRDDRRSKSIEER). Phosphoserine occurs at positions 265 and 298. Disordered regions lie at residues 328–434 (LFRA…TSSV), 474–536 (GSIL…QPQM), 552–576 (SQLS…YPAS), and 595–627 (QLST…QQPP). The segment covering 337–348 (GRTSGSRQSSSE) has biased composition (low complexity). Residues 349 to 358 (TELRWPDHQR) show a composition bias toward basic and acidic residues. Residues 359 to 380 (AWSSTDSDSSNRNLKPTMTKTA) show a composition bias toward polar residues. Ser-361 and Ser-381 each carry phosphoserine. Residues 401–421 (GKLSKTGSESSSSAGSSGSLS) are compositionally biased toward low complexity. Polar residues predominate over residues 422–434 (RTHPQSTALTSSV). Pro residues predominate over residues 514–524 (QQPPQQQPSPQ). The span at 525–535 (PQQQVQASQPQ) shows a compositional bias: low complexity. 2 stretches are compositionally biased toward polar residues: residues 552–563 (SQLSMSRQSSGD) and 595–613 (QLST…QQVL). A Phosphoserine modification is found at Ser-557. At Arg-650 the chain carries Asymmetric dimethylarginine.

As to quaternary structure, interacts with CALM1. Post-translationally, phosphorylation of isoform 2 at Ser-55 is enhanced upon dopamine D1 receptor activation and favors interaction with CALM1. Methylated by CARM1 at Arg-650 in immature thymocytes. In terms of tissue distribution, present at high levels in thymus and low levels in brain. In thymus, isoform 1 is specifically found in immature thymocytes (at protein level).

Its subcellular location is the cytoplasm. Its function is as follows. May act as a competitive inhibitor of calmodulin-dependent enzymes such as calcineurin in neurons. The polypeptide is cAMP-regulated phosphoprotein 21 (Arpp21) (Mus musculus (Mouse)).